Reading from the N-terminus, the 68-residue chain is Large ribosomal subunit protein bL31 (68 aa).

Zn(2+) contacts are provided by C16, C18, C37, and C40.

The protein belongs to the bacterial ribosomal protein bL31 family. Type A subfamily. In terms of assembly, part of the 50S ribosomal subunit. Requires Zn(2+) as cofactor.

Its function is as follows. Binds the 23S rRNA. This chain is Large ribosomal subunit protein bL31, found in Aquifex aeolicus (strain VF5).